The sequence spans 447 residues: MLHRYLPMTEEDKKEMLQTIGVQTIDELFSDIPESVRFKGDLKIKEAKSEPELLKELSQMASKNANLKEYASFLGAGVYDHYAPVIVDHVISRSEFYTAYTPYQPEISQGELQAIFEFQTMICELTGMDVANSSMYDGGTALAEAAMLAAGHTRKKKILVSAAVHPESRAVLETYAKGQNLEVVEIDHKNGVTDLEVLQSEVDDTVACVIVQYPNFFGQVEKLADIEKIVHQQKSLFIVSSNPLSLGALTPPGKFGADVVIGDAQPFGIPTQFGGPHCGYFATTKAFMRKIPGRLVGQTVDSDGKRGFVLTLQAREQHIRRDKATSNICSNQALNALAASVAMTALGKQGVKEMARQNISKAQYAKRQFEAKGFTVTFAGPFFNEFVVDCKRPVKEINDVLIQKNIIGGYDLGRDYKEHENHMLVAVTELRTKEEIDTLVNEMGAIQ.

Belongs to the GcvP family. N-terminal subunit subfamily. The glycine cleavage system is composed of four proteins: P, T, L and H. In this organism, the P 'protein' is a heterodimer of two subunits.

It carries out the reaction N(6)-[(R)-lipoyl]-L-lysyl-[glycine-cleavage complex H protein] + glycine + H(+) = N(6)-[(R)-S(8)-aminomethyldihydrolipoyl]-L-lysyl-[glycine-cleavage complex H protein] + CO2. Its function is as follows. The glycine cleavage system catalyzes the degradation of glycine. The P protein binds the alpha-amino group of glycine through its pyridoxal phosphate cofactor; CO(2) is released and the remaining methylamine moiety is then transferred to the lipoamide cofactor of the H protein. This is Probable glycine dehydrogenase (decarboxylating) subunit 1 from Bacillus mycoides (strain KBAB4) (Bacillus weihenstephanensis).